We begin with the raw amino-acid sequence, 464 residues long: MTNNVITRFAPSPTGFLHIGSARTALFNYLFAKHNNGKFLLRIEDTDKERSTEAAVEAIFSGLKWLGLNWDDEVVFQSKRNDLYKEAALKLLAEGKAYYCFTPQEEIEKQRQEALENKQHFIFNSKWRDKTSDTYPKDIKPVIRLKTPSSGSITIHDTLQGDVVIENCHIDDMVLLRSDGTATYMLAVVVDDHDMGITHIIRGDDHLTNAARQIAIYNAFGYHVPIMTHIPLIHGADGAKLSKRHGALGVEAYKDMGYLPESLCNYLLRLGWSHGDDEIIQMDQAIEWFNLDSLGKSPARLDFTKMNSLNSHYLRMLDEDSLITKILEILNRNYKVSEQEVNYIRRGLQGLLVRSETLLDLAKLAKIYLVNIPVAYESEAKEIIANCDKNLINNVVQGLEKLERFDKESVQDEFKKIAAANSLKLNEVMKPVRALITGMVGSPSVFEIAEILGKENILKRLEIK.

The 'HIGH' region signature appears at 11 to 21 (PSPTGFLHIGS). The 'KMSKS' region motif lies at 240–244 (KLSKR). Lys-243 provides a ligand contact to ATP.

Belongs to the class-I aminoacyl-tRNA synthetase family. Glutamate--tRNA ligase type 1 subfamily. Monomer.

It localises to the cytoplasm. It catalyses the reaction tRNA(Glu) + L-glutamate + ATP = L-glutamyl-tRNA(Glu) + AMP + diphosphate. Functionally, catalyzes the attachment of glutamate to tRNA(Glu) in a two-step reaction: glutamate is first activated by ATP to form Glu-AMP and then transferred to the acceptor end of tRNA(Glu). In Rickettsia bellii (strain OSU 85-389), this protein is Glutamate--tRNA ligase 2.